Reading from the N-terminus, the 384-residue chain is Sensor protein VanS (384 aa).

Transmembrane regions (helical) follow at residues 21–41 and 76–96; these read MYIV…RSMI and IDIF…RVML. The region spanning 161-376 is the Histidine kinase domain; the sequence is YLAHDIKTPL…TFRVELPAMP (216 aa). His164 carries the post-translational modification Phosphohistidine; by autocatalysis. The involved in low-affinity ATP-binding. Exhibits higher affinity for ATP than GTP stretch occupies residues 221-384; that stretch reads QTITLTKTHI…MPDLVDKRRS (164 aa).

Autophosphorylated.

The protein resides in the membrane. The catalysed reaction is ATP + protein L-histidine = ADP + protein N-phospho-L-histidine.. With respect to regulation, phosphorylation of VanR inhibited by EDTA. Its function is as follows. Member of the two-component regulatory system VanS/VanR. Functions as a sensor protein kinase which is autophosphorylated at a histidine residue in response to environmental stimuli, such as glycopeptide antibiotics. VanS transfers its phosphate group to transcriptional regulatory protein VanR, thereby modulating expression of target genes. Binds directly to, and autophosphorylation activity is enhanced by, the glycopeptides vancomycin and teicoplanin, in vitro. However it has also been reported that autophosphorylation, phosphate transfer to VanR and dephosphorylation of phospho-VanR are all unaffected by the presence of vancomycin, in vitro. In the absence of vancomycin, negatively regulates VanR-mediated activation of vanS, vanH, vanA and vanX, probably as a result of dephosphorylating phospho-VanR. May inhibit promoter-specific DNA binding by VanR. Involved in conferring vancomycin resistance. The protein is Sensor protein VanS of Enterococcus faecium (Streptococcus faecium).